The sequence spans 393 residues: Elongation factor Tu (393 aa).

A tr-type G domain is found at 10-202; that stretch reads KPHVNIGTIG…AVDEYIPTPE (193 aa). A G1 region spans residues 19-26; sequence GHVDHGKT. Residue 19–26 coordinates GTP; that stretch reads GHVDHGKT. Residue threonine 26 participates in Mg(2+) binding. Residues 60–64 are G2; it reads GITIN. Residues 81-84 form a G3 region; it reads DCPG. Residues 81–85 and 136–139 contribute to the GTP site; these read DCPGH and NKAD. The segment at 136–139 is G4; it reads NKAD. The interval 174-176 is G5; sequence SAL.

This sequence belongs to the TRAFAC class translation factor GTPase superfamily. Classic translation factor GTPase family. EF-Tu/EF-1A subfamily. In terms of assembly, monomer.

The protein localises to the cytoplasm. It carries out the reaction GTP + H2O = GDP + phosphate + H(+). In terms of biological role, GTP hydrolase that promotes the GTP-dependent binding of aminoacyl-tRNA to the A-site of ribosomes during protein biosynthesis. The sequence is that of Elongation factor Tu from Clostridium novyi (strain NT).